Consider the following 341-residue polypeptide: Anthranilate phosphoribosyltransferase (341 aa).

5-phospho-alpha-D-ribose 1-diphosphate-binding positions include G79, 82–83 (GD), T87, 89–92 (NIST), 107–115 (KHGNRAVSS), and S119. G79 is an anthranilate binding site. S91 lines the Mg(2+) pocket. Residue N110 coordinates anthranilate. R165 provides a ligand contact to anthranilate. Mg(2+)-binding residues include D224 and E225.

Belongs to the anthranilate phosphoribosyltransferase family. Homodimer. The cofactor is Mg(2+).

It catalyses the reaction N-(5-phospho-beta-D-ribosyl)anthranilate + diphosphate = 5-phospho-alpha-D-ribose 1-diphosphate + anthranilate. Its pathway is amino-acid biosynthesis; L-tryptophan biosynthesis; L-tryptophan from chorismate: step 2/5. Catalyzes the transfer of the phosphoribosyl group of 5-phosphorylribose-1-pyrophosphate (PRPP) to anthranilate to yield N-(5'-phosphoribosyl)-anthranilate (PRA). This is Anthranilate phosphoribosyltransferase from Bacillus thuringiensis subsp. konkukian (strain 97-27).